Consider the following 588-residue polypeptide: DNA ligase (588 aa).

Position 248 (E248) interacts with ATP. Residue K250 is the N6-AMP-lysine intermediate of the active site. 6 residues coordinate ATP: R255, R270, E300, F341, R418, and K424.

The protein belongs to the ATP-dependent DNA ligase family. The cofactor is Mg(2+).

The enzyme catalyses ATP + (deoxyribonucleotide)n-3'-hydroxyl + 5'-phospho-(deoxyribonucleotide)m = (deoxyribonucleotide)n+m + AMP + diphosphate.. In terms of biological role, DNA ligase that seals nicks in double-stranded DNA during DNA replication, DNA recombination and DNA repair. The protein is DNA ligase of Thermoplasma volcanium (strain ATCC 51530 / DSM 4299 / JCM 9571 / NBRC 15438 / GSS1).